Here is a 124-residue protein sequence, read N- to C-terminus: Small ribosomal subunit protein uS12c (124 aa).

This sequence belongs to the universal ribosomal protein uS12 family. Part of the 30S ribosomal subunit.

Its subcellular location is the plastid. The protein resides in the chloroplast. With S4 and S5 plays an important role in translational accuracy. Located at the interface of the 30S and 50S subunits. This Cyanidium caldarium (Red alga) protein is Small ribosomal subunit protein uS12c (rps12).